The sequence spans 201 residues: ATP-dependent Clp protease proteolytic subunit (201 aa).

Serine 98 (nucleophile) is an active-site residue. Residue histidine 123 is part of the active site.

The protein belongs to the peptidase S14 family. In terms of assembly, fourteen ClpP subunits assemble into 2 heptameric rings which stack back to back to give a disk-like structure with a central cavity, resembling the structure of eukaryotic proteasomes.

It localises to the cytoplasm. The catalysed reaction is Hydrolysis of proteins to small peptides in the presence of ATP and magnesium. alpha-casein is the usual test substrate. In the absence of ATP, only oligopeptides shorter than five residues are hydrolyzed (such as succinyl-Leu-Tyr-|-NHMec, and Leu-Tyr-Leu-|-Tyr-Trp, in which cleavage of the -Tyr-|-Leu- and -Tyr-|-Trp bonds also occurs).. Cleaves peptides in various proteins in a process that requires ATP hydrolysis. Has a chymotrypsin-like activity. Plays a major role in the degradation of misfolded proteins. This chain is ATP-dependent Clp protease proteolytic subunit, found in Rickettsia conorii (strain ATCC VR-613 / Malish 7).